The primary structure comprises 801 residues: Phenylalanine--tRNA ligase beta subunit (801 aa).

In terms of domain architecture, tRNA-binding spans Ala-39 to Phe-153. The B5 domain occupies Thr-406 to Thr-481. Mg(2+) contacts are provided by Asp-459, Asp-465, Glu-468, and Glu-469. The 94-residue stretch at Thr-708 to Arg-801 folds into the FDX-ACB domain.

Belongs to the phenylalanyl-tRNA synthetase beta subunit family. Type 1 subfamily. Tetramer of two alpha and two beta subunits. It depends on Mg(2+) as a cofactor.

It is found in the cytoplasm. It catalyses the reaction tRNA(Phe) + L-phenylalanine + ATP = L-phenylalanyl-tRNA(Phe) + AMP + diphosphate + H(+). This Streptococcus mutans serotype c (strain ATCC 700610 / UA159) protein is Phenylalanine--tRNA ligase beta subunit.